The sequence spans 370 residues: 3-isopropylmalate dehydrogenase (370 aa).

Position 77-90 (glycine 77–glutamate 90) interacts with NAD(+). Positions 97, 107, 135, and 226 each coordinate substrate. Residues aspartate 226, aspartate 250, and aspartate 254 each contribute to the Mg(2+) site. Residue glycine 290–asparagine 302 participates in NAD(+) binding.

Belongs to the isocitrate and isopropylmalate dehydrogenases family. LeuB type 1 subfamily. In terms of assembly, homodimer. Mg(2+) is required as a cofactor. The cofactor is Mn(2+).

The protein resides in the cytoplasm. It carries out the reaction (2R,3S)-3-isopropylmalate + NAD(+) = 4-methyl-2-oxopentanoate + CO2 + NADH. It functions in the pathway amino-acid biosynthesis; L-leucine biosynthesis; L-leucine from 3-methyl-2-oxobutanoate: step 3/4. Functionally, catalyzes the oxidation of 3-carboxy-2-hydroxy-4-methylpentanoate (3-isopropylmalate) to 3-carboxy-4-methyl-2-oxopentanoate. The product decarboxylates to 4-methyl-2 oxopentanoate. The protein is 3-isopropylmalate dehydrogenase of Rhodopseudomonas palustris (strain HaA2).